Consider the following 382-residue polypeptide: Chaperone protein DnaJ (382 aa).

The region spanning 5–70 is the J domain; the sequence is DFYEILGVPK…QKRAAYDQYG (66 aa). The segment at 137-215 adopts a CR-type zinc-finger fold; sequence GVTKEIRIPT…CHGHGRVEKT (79 aa). Zn(2+) contacts are provided by C150, C153, C167, C170, C189, C192, C203, and C206. CXXCXGXG motif repeat units lie at residues 150–157, 167–174, 189–196, and 203–210; these read CDICHGSG, CPTCHGSG, CPHCHGRG, and CNKCHGHG.

This sequence belongs to the DnaJ family. As to quaternary structure, homodimer. It depends on Zn(2+) as a cofactor.

The protein localises to the cytoplasm. Its function is as follows. Participates actively in the response to hyperosmotic and heat shock by preventing the aggregation of stress-denatured proteins and by disaggregating proteins, also in an autonomous, DnaK-independent fashion. Unfolded proteins bind initially to DnaJ; upon interaction with the DnaJ-bound protein, DnaK hydrolyzes its bound ATP, resulting in the formation of a stable complex. GrpE releases ADP from DnaK; ATP binding to DnaK triggers the release of the substrate protein, thus completing the reaction cycle. Several rounds of ATP-dependent interactions between DnaJ, DnaK and GrpE are required for fully efficient folding. Also involved, together with DnaK and GrpE, in the DNA replication of plasmids through activation of initiation proteins. In Enterobacter sp. (strain 638), this protein is Chaperone protein DnaJ.